We begin with the raw amino-acid sequence, 55 residues long: Neurotoxin X-29S (55 aa).

A signal peptide spans 1–23; that stretch reads MKIFFAVLVILVLFSMLIWTAYG. 3 cysteine pairs are disulfide-bonded: Cys30–Cys45, Cys36–Cys50, and Cys39–Cys53.

Expressed by the venom gland.

Its subcellular location is the secreted. The protein is Neurotoxin X-29S of Olivierus martensii (Manchurian scorpion).